Reading from the N-terminus, the 152-residue chain is Deoxyuridine 5'-triphosphate nucleotidohydrolase (152 aa).

Substrate is bound by residues 71–73, Asn-84, 88–90, and Met-98; these read RSG and LID.

Belongs to the dUTPase family. Mg(2+) is required as a cofactor.

The catalysed reaction is dUTP + H2O = dUMP + diphosphate + H(+). It functions in the pathway pyrimidine metabolism; dUMP biosynthesis; dUMP from dCTP (dUTP route): step 2/2. This enzyme is involved in nucleotide metabolism: it produces dUMP, the immediate precursor of thymidine nucleotides and it decreases the intracellular concentration of dUTP so that uracil cannot be incorporated into DNA. This Haemophilus ducreyi (strain 35000HP / ATCC 700724) protein is Deoxyuridine 5'-triphosphate nucleotidohydrolase.